Here is a 546-residue protein sequence, read N- to C-terminus: 2-isopropylmalate synthase (546 aa).

The region spanning isoleucine 8–serine 271 is the Pyruvate carboxyltransferase domain. Positions 17, 208, 210, and 244 each coordinate Mn(2+). The regulatory domain stretch occupies residues glutamine 408–asparagine 546.

The protein belongs to the alpha-IPM synthase/homocitrate synthase family. LeuA type 1 subfamily. Homodimer. Mn(2+) serves as cofactor.

The protein resides in the cytoplasm. The catalysed reaction is 3-methyl-2-oxobutanoate + acetyl-CoA + H2O = (2S)-2-isopropylmalate + CoA + H(+). It participates in amino-acid biosynthesis; L-leucine biosynthesis; L-leucine from 3-methyl-2-oxobutanoate: step 1/4. In terms of biological role, catalyzes the condensation of the acetyl group of acetyl-CoA with 3-methyl-2-oxobutanoate (2-ketoisovalerate) to form 3-carboxy-3-hydroxy-4-methylpentanoate (2-isopropylmalate). This chain is 2-isopropylmalate synthase, found in Prochlorococcus marinus (strain AS9601).